Here is a 363-residue protein sequence, read N- to C-terminus: S-adenosylmethionine:tRNA ribosyltransferase-isomerase (363 aa).

This sequence belongs to the QueA family. Monomer.

The protein resides in the cytoplasm. It carries out the reaction 7-aminomethyl-7-carbaguanosine(34) in tRNA + S-adenosyl-L-methionine = epoxyqueuosine(34) in tRNA + adenine + L-methionine + 2 H(+). It participates in tRNA modification; tRNA-queuosine biosynthesis. Transfers and isomerizes the ribose moiety from AdoMet to the 7-aminomethyl group of 7-deazaguanine (preQ1-tRNA) to give epoxyqueuosine (oQ-tRNA). In Magnetococcus marinus (strain ATCC BAA-1437 / JCM 17883 / MC-1), this protein is S-adenosylmethionine:tRNA ribosyltransferase-isomerase.